Here is a 79-residue protein sequence, read N- to C-terminus: Serine protease inhibitor Kazal-type 1-like (79 aa).

An N-terminal signal peptide occupies residues 1–23 (MKVAIIFLLSALALLNLAGNTTA). The Kazal-like domain maps to 26 to 79 (IGKKANCPNTLVGCPRDYDPVCGTDGKTYANECILCFENRKFGTSIRIQRRGLC). Intrachain disulfides connect Cys32–Cys61, Cys39–Cys58, and Cys47–Cys79.

In terms of tissue distribution, seminal vesicle.

It is found in the secreted. Functionally, serine protease inhibitor which exhibits anti-trypsin activity. In the pancreas, protects against trypsin-catalyzed premature activation of zymogens. In terms of biological role, in the male reproductive tract, binds to sperm heads where it modulates sperm capacitance by inhibiting calcium uptake and nitrogen oxide (NO) production. The chain is Serine protease inhibitor Kazal-type 1-like from Rattus norvegicus (Rat).